A 195-amino-acid polypeptide reads, in one-letter code: uncharacterized protein (195 aa).

2 helical membrane passes run 13–32 (VIGL…FLVA) and 42–64 (LSNS…TILV).

It is found in the cell membrane. This is an uncharacterized protein from Archaeoglobus fulgidus (strain ATCC 49558 / DSM 4304 / JCM 9628 / NBRC 100126 / VC-16).